A 1437-amino-acid polypeptide reads, in one-letter code: MRRGCRHHLAAVVLLIATFPPLAYNQNIGGINQNIGGTPQNPTINQVSPGQIFSGTGNNPFYGVNLVPFGPEAGDLMVNPSMLTSGMTIDLYMFFPYYGGLYNYTTISVNGYLGFATVLDQGPTINVGPETTDWPRQEDPAMIAPYLCKQQVPQQGNPARRAGVYYRLLLRQSLFGRESNSNLNLGGTLQQNAFFGQQASQACPGTADSYVRCDSNSDYFLDQMMIWVQEGVAGGAMFRADAAVVVTWYNTASAISGRSDIDAGQTGTYQVIWLTDSTARLSYVIINYDRLGFDAQDFRGNSRSGRCRAVFNGGNHTGTVEVDPTQPYKNTPKVLAQRSGVPHMVRGRYMFRVDDVVRPAGCSNKTGGTYPIMIYPNIVNMLGDMTVDVNACCLDRTQTYIMMIEEREVATCQVINPAIARCSLPRIYDWGTKTVYFQPESRGANDEKAFVGYIYFVPPTLDPMRLDIGNIYEWYKNPMTNYLMPITWYPRNFTNPDILTNGNNMGVRISDDSMYGVQLGLYIVGYREFKDDEIKKFRPEYRTLARITTYSNQNNANYRWMPQEEVINTNQVQQWYLTDWERMHTLYTYRVGFFKLAPINPNDANGTQLLPGLVSAPISLHWLWTPENQQFATLTLNQQDRDQRIEFVKEKSREMCHDWYDEDGALWNFIRDTETNTSCPCIETQALLDLGRFMPHPRCSQMFRDITCTTVIGSKNCYMSSSNIYSSYAGNGNTFNNMDTNRFMTHYGQVCCYDESGYLMQTPYQPVIKTQREYFYNPGYPLRAYEFGTAPYMGQFEVPGLSVFHNDYMPYFLCCKFADFRCQMFYWRRPSSACQQYQPPAIGHAQGAGVFQTIDNDKFIFNQPGVFNFLYIPQSVRTPEVRIQTRLERYPNRKVDFGLLGRYISQYELVQPTNATVITGIALEATGTERVIVMTRKDTRRFRYRTNIIVGNILRYFDTIRLQRFRGVLIYVNNVERGQPEIYVVLEEAQIGVKVTESYALDIDRLPNYQESMGMLDIQISVSPQYGVRPDGDKTQETQYRQMYNLPRVSGLIRPYPDQTSGSLNEGLTLNDVNSDSYRQQIINNYLVLGTGEPGTQQNQAGTLNQNMPQDNMFTTSRDEDKQFDVFPEASMRSEPVYKTAPIFDTGSYRFVPQTGAMILQLLNTCRDLQNNPNTDLQPYQSIATLSYGLQCPDDPGQVLTECGDSVACLYDYALLNSKVLGQEEQDAWNMFTTDRALAIRQYNSCGAINIEYPEYMMKTPALSSGYLQGDVARFECYQSHWVKGDHEYKCGIVVDYNRPNEYRFEWNKGNQPWCRSRIKENYFKWLAVIAGIVGIIIVILLIFLVFWCIKRKKLQESRNYSGTAAYSNNAFQNQTYETKPSRALSVGDLSTAPRTVAMPPPRGTTATPMTLEPRGFSPVPSDVRGSQGMLGLNTSV.

Residues 1-25 (MRRGCRHHLAAVVLLIATFPPLAYN) form the signal peptide. The Extracellular portion of the chain corresponds to 26 to 1326 (QNIGGINQNI…SRIKENYFKW (1301 aa)). N103, N315, N364, N492, N605, N676, and N914 each carry an N-linked (GlcNAc...) asparagine glycan. One can recognise an NIDO domain in the interval 193–356 (AFFGQQASQA…GRYMFRVDDV (164 aa)). One can recognise an AMOP domain in the interval 648–829 (VKEKSREMCH…FRCQMFYWRR (182 aa)). The chain crosses the membrane as a helical span at residues 1327-1347 (LAVIAGIVGIIIVILLIFLVF). The Cytoplasmic segment spans residues 1348 to 1437 (WCIKRKKLQE…QGMLGLNTSV (90 aa)). The segment at 1394-1419 (PRTVAMPPPRGTTATPMTLEPRGFSP) is disordered.

The protein resides in the membrane. This is an uncharacterized protein from Caenorhabditis elegans.